Reading from the N-terminus, the 404-residue chain is G-protein coupled receptor 182 (404 aa).

Topologically, residues 1-57 are extracellular; it reads MSVKPSWGPGPSEGVTAVPTSDLGEIHNWTELLDLFNHTLSECHVELSQSTKRVVLF. Residues Asn28 and Asn37 are each glycosylated (N-linked (GlcNAc...) asparagine). The chain crosses the membrane as a helical span at residues 58 to 79; the sequence is ALYLAMFVVGLVENLLVICVNW. Residues 80 to 90 lie on the Cytoplasmic side of the membrane; it reads RGSGRAGLMNL. The helical transmembrane segment at 91–113 threads the bilayer; that stretch reads YILNMAIADLGIVLSLPVWMLEV. Over 114–127 the chain is Extracellular; it reads TLDYTWLWGSFSCR. Cys126 and Cys202 are disulfide-bonded. A helical membrane pass occupies residues 128-149; the sequence is FTHYFYFVNMYSSIFFLVCLSV. The Cytoplasmic portion of the chain corresponds to 150–170; it reads DRYVTLTSASPSWQRYQHRVR. A helical membrane pass occupies residues 171-193; that stretch reads RAMCAGIWVLSAIIPLPEVVHIQ. The Extracellular segment spans residues 194–217; the sequence is LVEGPEPMCLFMAPFETYSTWALA. The helical transmembrane segment at 218–239 threads the bilayer; sequence VALSTTILGFLLPFPLITVFNV. The Cytoplasmic portion of the chain corresponds to 240 to 258; sequence LTACRLRQPGQPKSRRHCL. The helical transmembrane segment at 259–280 threads the bilayer; sequence LLCAYVAVFVMCWLPYHVTLLL. At 281–299 the chain is on the extracellular side; the sequence is LTLHGTHISLHCHLVHLLY. The chain crosses the membrane as a helical span at residues 300–320; that stretch reads FFYDVIDCFSMLHCVINPILY. At 321–404 the chain is on the cytoplasmic side; it reads NFLSPHFRGR…ISPTQPLTPS (84 aa).

The protein belongs to the G-protein coupled receptor 1 family. As to expression, highly expressed in heart, skeletal muscle, immune system, adrenal gland and liver.

The protein localises to the cell membrane. Its function is as follows. Orphan receptor. The polypeptide is G-protein coupled receptor 182 (GPR182) (Homo sapiens (Human)).